Here is a 588-residue protein sequence, read N- to C-terminus: MAAHDDDMNRGIRPGRGSDDPSGQIAYLEQEIAVLRRKLADSPRHTRILEERIVELQTNLAGVSAQNERLANTLREARDQIVALKEEVDRLAQPPAGFGVFLTANEDGTADIFTGGRKLRVNVSPSVDLEELRRGQEVMLNEALNVVEAMEYESVGDIVTLKEILEDGERALVQGHTDEERVVRLAEPLLDITIRPGDALLLEPRSGYVYEVVPKSEVEELVLEEVPDIGYEQIGGLGNQIEMIRDAVELPYLYPDLFKEHELRPPKGVLLYGPPGCGKTLIAKAVANSLAKKVAEVTGQAQGKSFFLNIKGPELLNKYVGETERQIRLVFQRAREKASEGTPVIVFFDEMESLFRTRGSGVSSDVENTIVPQLLAEIDGVEGLQNVVVIGASNREDMIDPAILRPGRLDVKIKIERPDAEAAKDIFQKYLTERLPLHTDDLGEHGGSKATTVQSMIQTAVEHMYAESEENRFLEVTYANGDKEVLYFKDFNSGAMIENIVGRAKKMAIKDFLDKNQKGLRVSHLLQACVDEFKENEDLPNTTNPDDWARISGKKGERIVYIRTLITGKQGADTGRSIDTVANTGQYL.

A compositionally biased stretch (basic and acidic residues) spans 1-10 (MAAHDDDMNR). A disordered region spans residues 1 to 23 (MAAHDDDMNRGIRPGRGSDDPSG). Residues 47 to 94 (RILEERIVELQTNLAGVSAQNERLANTLREARDQIVALKEEVDRLAQP) adopt a coiled-coil conformation. 276-281 (GCGKTL) lines the ATP pocket. The segment at 587–588 (YL) is docks into pockets in the proteasome alpha-ring.

Belongs to the AAA ATPase family. In terms of assembly, homohexamer. Assembles into a hexameric ring structure that caps the 20S proteasome core. Strongly interacts with the prokaryotic ubiquitin-like protein Pup through a hydrophobic interface; the interacting region of ARC lies in its N-terminal coiled-coil domain. There is one Pup binding site per ARC hexamer ring. Upon ATP-binding, the C-terminus of ARC interacts with the alpha-rings of the proteasome core, possibly by binding to the intersubunit pockets.

It functions in the pathway protein degradation; proteasomal Pup-dependent pathway. In terms of biological role, ATPase which is responsible for recognizing, binding, unfolding and translocation of pupylated proteins into the bacterial 20S proteasome core particle. May be essential for opening the gate of the 20S proteasome via an interaction with its C-terminus, thereby allowing substrate entry and access to the site of proteolysis. Thus, the C-termini of the proteasomal ATPase may function like a 'key in a lock' to induce gate opening and therefore regulate proteolysis. This chain is Proteasome-associated ATPase, found in Streptomyces scabiei (strain 87.22).